Consider the following 190-residue polypeptide: Dynactin subunit 6 (190 aa).

Position 186 is a phosphothreonine; by CDK1 (T186).

This sequence belongs to the dynactin subunits 5/6 family. Dynactin subunit 6 subfamily. Subunit of dynactin, a multiprotein complex part of a tripartite complex with dynein and a adapter, such as BICDL1, BICD2 or HOOK3. The dynactin complex is built around ACTR1A/ACTB filament and consists of an actin-related filament composed of a shoulder domain, a pointed end and a barbed end. Its length is defined by its flexible shoulder domain. The soulder is composed of 2 DCTN1 subunits, 4 DCTN2 and 2 DCTN3. The 4 DCNT2 (via N-terminus) bind the ACTR1A filament and act as molecular rulers to determine the length. The pointed end is important for binding dynein-dynactin cargo adapters. Consists of 4 subunits: ACTR10, DCNT4, DCTN5 and DCTN6. Within the complex DCTN6 forms a heterodimer with DCTN5. The barbed end is composed of a CAPZA1:CAPZB heterodimers, which binds ACTR1A/ACTB filament and dynactin and stabilizes dynactin. Interacts with PLK1. Interacts with N4BP2L1. In terms of processing, phosphorylation at Thr-186 by CDK1 during mitotic prometaphase creates a binding site for PLK1 that facilitates its recruitment to kinetochores.

Its subcellular location is the cytoplasm. The protein localises to the cytoskeleton. The protein resides in the chromosome. It localises to the centromere. It is found in the kinetochore. Part of the dynactin complex that activates the molecular motor dynein for ultra-processive transport along microtubules. This is Dynactin subunit 6 (DCTN6) from Bos taurus (Bovine).